A 408-amino-acid chain; its full sequence is Protein CNPPD1 (408 aa).

A helical membrane pass occupies residues cysteine 233–isoleucine 253.

The protein belongs to the CNPPD1 family.

It is found in the membrane. The sequence is that of Protein CNPPD1 (Cnppd1) from Rattus norvegicus (Rat).